The following is a 1976-amino-acid chain: Myosin-10 (1976 aa).

Arginine 18 carries the post-translational modification Omega-N-methylarginine. A Myosin N-terminal SH3-like domain is found at threonine 31–proline 81. Residues serine 85–aspartate 783 enclose the Myosin motor domain. Glycine 178–threonine 185 lines the ATP pocket. Position 214 is a phosphoserine (leucine 214). N6-acetyllysine is present on lysine 442. The tract at residues leucine 661–histidine 683 is actin-binding. One can recognise an IQ domain in the interval isoleucine 786 to alanine 815. A coiled-coil region spans residues leucine 845–glutamate 1976. The segment at phenylalanine 1127–glutamate 1147 is disordered. Residues serine 1129–glutamate 1147 are compositionally biased toward basic and acidic residues. At serine 1145 the chain carries Phosphoserine. Residues lysine 1241, lysine 1301, and lysine 1645 each carry the N6-acetyllysine modification. 2 disordered regions span residues alanine 1697–leucine 1728 and methionine 1872–glutamate 1976. The segment covering serine 1698–glutamine 1708 has biased composition (basic and acidic residues). Arginine 1930 is subject to Omega-N-methylarginine. A phosphoserine mark is found at serine 1935, serine 1937, serine 1938, and serine 1939. The residue at position 1940 (arginine 1940) is an Omega-N-methylarginine. 2 positions are modified to phosphoserine: serine 1952 and serine 1956. Threonine 1960 bears the Phosphothreonine mark. Residues valine 1967–glutamate 1976 show a composition bias toward polar residues. Residue serine 1975 is modified to Phosphoserine.

This sequence belongs to the TRAFAC class myosin-kinesin ATPase superfamily. Myosin family. Myosin is a hexameric protein that consists of 2 heavy chain subunits (MHC), 2 alkali light chain subunits (MLC) and 2 regulatory light chain subunits (MLC-2). Interacts with PLEKHG6. Interacts with ECPAS. Interacts with KIF26B. Interacts with LARP6. Interacts with MCC. Interacts with CFAP95. As to quaternary structure, (Microbial infection) Interacts with herpes simplex virus 1/HHV-1 envelope glycoprotein B. Phosphorylated by ABL2. As to expression, isoform 1 is expressed in cerebellum and spinal chord. Isoform 2 is expressed in cerebrum and retina. Isoform 3 is expressed in the cerebrum and to a much lower extent in cerebellum.

The protein resides in the cell projection. Its subcellular location is the lamellipodium. The protein localises to the cell membrane. Cellular myosin that appears to play a role in cytokinesis, cell shape, and specialized functions such as secretion and capping. Involved with LARP6 in the stabilization of type I collagen mRNAs for CO1A1 and CO1A2. During cell spreading, plays an important role in cytoskeleton reorganization, focal contacts formation (in the central part but not the margins of spreading cells), and lamellipodial extension; this function is mechanically antagonized by MYH9. Functionally, (Microbial infection) Acts as a receptor for herpes simplex virus 1/HHV-1 envelope glycoprotein B. This is Myosin-10 (MYH10) from Homo sapiens (Human).